Reading from the N-terminus, the 891-residue chain is Valine--tRNA ligase (891 aa).

Positions 43 to 53 (PFTSGTLHLGH) match the 'HIGH' region motif. The short motif at 536–540 (KMSKS) is the 'KMSKS' region element. Lys-539 lines the ATP pocket.

The protein belongs to the class-I aminoacyl-tRNA synthetase family. ValS type 2 subfamily.

It is found in the cytoplasm. It catalyses the reaction tRNA(Val) + L-valine + ATP = L-valyl-tRNA(Val) + AMP + diphosphate. Functionally, catalyzes the attachment of valine to tRNA(Val). As ValRS can inadvertently accommodate and process structurally similar amino acids such as threonine, to avoid such errors, it has a 'posttransfer' editing activity that hydrolyzes mischarged Thr-tRNA(Val) in a tRNA-dependent manner. This chain is Valine--tRNA ligase, found in Pyrococcus abyssi (strain GE5 / Orsay).